A 153-amino-acid chain; its full sequence is Ribonuclease HI (153 aa).

The 141-residue stretch at 1–141 (MKSVNIFTDG…CDELAKLGAN (141 aa)) folds into the RNase H type-1 domain. Residues aspartate 9, glutamate 47, aspartate 69, and aspartate 133 each coordinate Mg(2+).

Belongs to the RNase H family. As to quaternary structure, monomer. It depends on Mg(2+) as a cofactor.

Its subcellular location is the cytoplasm. The enzyme catalyses Endonucleolytic cleavage to 5'-phosphomonoester.. In terms of biological role, endonuclease that specifically degrades the RNA of RNA-DNA hybrids. This is Ribonuclease HI from Haemophilus ducreyi (strain 35000HP / ATCC 700724).